The following is a 51-amino-acid chain: Large ribosomal subunit protein eL39 (51 aa).

It belongs to the eukaryotic ribosomal protein eL39 family.

This chain is Large ribosomal subunit protein eL39, found in Thermococcus onnurineus (strain NA1).